Consider the following 316-residue polypeptide: Lipoyl synthase (316 aa).

Residues Cys-61, Cys-66, Cys-72, Cys-87, Cys-91, Cys-94, and Ser-301 each contribute to the [4Fe-4S] cluster site. The 218-residue stretch at 73 to 290 folds into the Radical SAM core domain; that stretch reads FGKGTATFMI…ERAAIEMGFS (218 aa).

It belongs to the radical SAM superfamily. Lipoyl synthase family. [4Fe-4S] cluster serves as cofactor.

The protein localises to the cytoplasm. It catalyses the reaction [[Fe-S] cluster scaffold protein carrying a second [4Fe-4S](2+) cluster] + N(6)-octanoyl-L-lysyl-[protein] + 2 oxidized [2Fe-2S]-[ferredoxin] + 2 S-adenosyl-L-methionine + 4 H(+) = [[Fe-S] cluster scaffold protein] + N(6)-[(R)-dihydrolipoyl]-L-lysyl-[protein] + 4 Fe(3+) + 2 hydrogen sulfide + 2 5'-deoxyadenosine + 2 L-methionine + 2 reduced [2Fe-2S]-[ferredoxin]. Its pathway is protein modification; protein lipoylation via endogenous pathway; protein N(6)-(lipoyl)lysine from octanoyl-[acyl-carrier-protein]: step 2/2. Functionally, catalyzes the radical-mediated insertion of two sulfur atoms into the C-6 and C-8 positions of the octanoyl moiety bound to the lipoyl domains of lipoate-dependent enzymes, thereby converting the octanoylated domains into lipoylated derivatives. This Nitrosospira multiformis (strain ATCC 25196 / NCIMB 11849 / C 71) protein is Lipoyl synthase.